Reading from the N-terminus, the 262-residue chain is [LysW]-aminoadipate/[LysW]-glutamate kinase (262 aa).

Residues Gly-35–Gly-36, Arg-62, and Asn-167 each bind substrate.

The protein belongs to the acetylglutamate kinase family. LysZ subfamily.

It is found in the cytoplasm. It catalyses the reaction [amino-group carrier protein]-C-terminal-N-(1,4-dicarboxybutan-1-yl)-L-glutamine + ATP = [amino-group carrier protein]-C-terminal-N-(1-carboxy-5-phosphooxy-5-oxopentan-1-yl)-L-glutamine + ADP. The catalysed reaction is [amino-group carrier protein]-C-terminal-gamma-(L-glutamyl)-L-glutamate + ATP = [amino-group carrier protein]-C-terminal-gamma-(5-phospho-L-glutamyl)-L-glutamate + ADP. It participates in amino-acid biosynthesis; L-lysine biosynthesis via AAA pathway; L-lysine from L-alpha-aminoadipate (Thermus route): step 2/5. It functions in the pathway amino-acid biosynthesis; L-arginine biosynthesis. Its function is as follows. Involved in both the arginine and lysine biosynthetic pathways. Phosphorylates the LysW-bound precursors glutamate (for arginine biosynthesis), respectively alpha-aminoadipate (for lysine biosynthesis). This is [LysW]-aminoadipate/[LysW]-glutamate kinase from Metallosphaera sedula (strain ATCC 51363 / DSM 5348 / JCM 9185 / NBRC 15509 / TH2).